The chain runs to 271 residues: Putative phosphoenolpyruvate synthase regulatory protein (271 aa).

Position 151–158 (151–158 (GVSRSGKT)) interacts with ADP.

The protein belongs to the pyruvate, phosphate/water dikinase regulatory protein family. PSRP subfamily.

It catalyses the reaction [pyruvate, water dikinase] + ADP = [pyruvate, water dikinase]-phosphate + AMP + H(+). It carries out the reaction [pyruvate, water dikinase]-phosphate + phosphate + H(+) = [pyruvate, water dikinase] + diphosphate. Functionally, bifunctional serine/threonine kinase and phosphorylase involved in the regulation of the phosphoenolpyruvate synthase (PEPS) by catalyzing its phosphorylation/dephosphorylation. This is Putative phosphoenolpyruvate synthase regulatory protein from Paraburkholderia phytofirmans (strain DSM 17436 / LMG 22146 / PsJN) (Burkholderia phytofirmans).